A 254-amino-acid chain; its full sequence is Alcohol dehydrogenase 2 (254 aa).

Residue 10–33 participates in NAD(+) binding; that stretch reads FVAGLGGIGLDTSREIVKSGPKNL. A substrate-binding site is contributed by Ser-138. Residue Tyr-151 is the Proton acceptor of the active site.

Belongs to the short-chain dehydrogenases/reductases (SDR) family. As to quaternary structure, homodimer.

It catalyses the reaction a primary alcohol + NAD(+) = an aldehyde + NADH + H(+). It carries out the reaction a secondary alcohol + NAD(+) = a ketone + NADH + H(+). This Drosophila montana (Fruit fly) protein is Alcohol dehydrogenase 2 (Adh2).